We begin with the raw amino-acid sequence, 274 residues long: Putative pyruvate, phosphate dikinase regulatory protein (274 aa).

ADP is bound at residue 149 to 156 (GVSRSSKT).

It belongs to the pyruvate, phosphate/water dikinase regulatory protein family. PDRP subfamily.

It catalyses the reaction N(tele)-phospho-L-histidyl/L-threonyl-[pyruvate, phosphate dikinase] + ADP = N(tele)-phospho-L-histidyl/O-phospho-L-threonyl-[pyruvate, phosphate dikinase] + AMP + H(+). The enzyme catalyses N(tele)-phospho-L-histidyl/O-phospho-L-threonyl-[pyruvate, phosphate dikinase] + phosphate + H(+) = N(tele)-phospho-L-histidyl/L-threonyl-[pyruvate, phosphate dikinase] + diphosphate. Functionally, bifunctional serine/threonine kinase and phosphorylase involved in the regulation of the pyruvate, phosphate dikinase (PPDK) by catalyzing its phosphorylation/dephosphorylation. The polypeptide is Putative pyruvate, phosphate dikinase regulatory protein (Rhizorhabdus wittichii (strain DSM 6014 / CCUG 31198 / JCM 15750 / NBRC 105917 / EY 4224 / RW1) (Sphingomonas wittichii)).